Here is a 196-residue protein sequence, read N- to C-terminus: dTTP/UTP pyrophosphatase (196 aa).

The active-site Proton acceptor is the D77.

This sequence belongs to the Maf family. YhdE subfamily. It depends on a divalent metal cation as a cofactor.

Its subcellular location is the cytoplasm. The catalysed reaction is dTTP + H2O = dTMP + diphosphate + H(+). The enzyme catalyses UTP + H2O = UMP + diphosphate + H(+). In terms of biological role, nucleoside triphosphate pyrophosphatase that hydrolyzes dTTP and UTP. May have a dual role in cell division arrest and in preventing the incorporation of modified nucleotides into cellular nucleic acids. The chain is dTTP/UTP pyrophosphatase from Christiangramia forsetii (strain DSM 17595 / CGMCC 1.15422 / KT0803) (Gramella forsetii).